Consider the following 385-residue polypeptide: Flap endonuclease 1 (385 aa).

Residues 1–104 (MGILGLSKLI…GELAKRAERR (104 aa)) are N-domain. Asp-34 serves as a coordination point for Mg(2+). DNA is bound by residues Arg-47 and Arg-70. 5 residues coordinate Mg(2+): Asp-86, Glu-158, Glu-160, Asp-179, and Asp-181. Positions 122–253 (GIEKFNRRLV…KRAIELINTY (132 aa)) are I-domain. Glu-158 is a binding site for DNA. 2 residues coordinate DNA: Gly-231 and Asp-233. Asp-233 contributes to the Mg(2+) binding site. Residues 336-344 (TQVRLDSFF) are interaction with PCNA. Residues 346–385 (TLPSTPNATNAAKRKAEEAKKSANNKKAKTSGGGRGRRPK) are disordered. A compositionally biased stretch (basic residues) spans 368–385 (ANNKKAKTSGGGRGRRPK).

It belongs to the XPG/RAD2 endonuclease family. FEN1 subfamily. As to quaternary structure, interacts with PCNA. Three molecules of FEN1 bind to one PCNA trimer with each molecule binding to one PCNA monomer. PCNA stimulates the nuclease activity without altering cleavage specificity. Mg(2+) serves as cofactor. In terms of processing, phosphorylated. Phosphorylation upon DNA damage induces relocalization to the nuclear plasma.

The protein resides in the nucleus. The protein localises to the nucleolus. Its subcellular location is the nucleoplasm. It localises to the mitochondrion. In terms of biological role, structure-specific nuclease with 5'-flap endonuclease and 5'-3' exonuclease activities involved in DNA replication and repair. During DNA replication, cleaves the 5'-overhanging flap structure that is generated by displacement synthesis when DNA polymerase encounters the 5'-end of a downstream Okazaki fragment. It enters the flap from the 5'-end and then tracks to cleave the flap base, leaving a nick for ligation. Also involved in the long patch base excision repair (LP-BER) pathway, by cleaving within the apurinic/apyrimidinic (AP) site-terminated flap. Acts as a genome stabilization factor that prevents flaps from equilibrating into structures that lead to duplications and deletions. Also possesses 5'-3' exonuclease activity on nicked or gapped double-stranded DNA, and exhibits RNase H activity. Also involved in replication and repair of rDNA and in repairing mitochondrial DNA. This chain is Flap endonuclease 1, found in Drosophila melanogaster (Fruit fly).